The chain runs to 604 residues: Afamin (604 aa).

Positions 1 to 21 (MKQLKLTGFVIFFFFLTESLT) are cleaved as a signal peptide. 3 consecutive Albumin domains span residues 22 to 210 (LPTQ…EPFI), 211 to 403 (YYLK…RFNE), and 404 to 598 (TTEK…PKLA). 17 cysteine pairs are disulfide-bonded: cysteine 77/cysteine 86, cysteine 99/cysteine 114, cysteine 113/cysteine 124, cysteine 148/cysteine 193, cysteine 192/cysteine 201, cysteine 224/cysteine 270, cysteine 269/cysteine 277, cysteine 289/cysteine 303, cysteine 302/cysteine 313, cysteine 340/cysteine 385, cysteine 384/cysteine 393, cysteine 416/cysteine 462, cysteine 461/cysteine 470, cysteine 483/cysteine 499, cysteine 498/cysteine 509, cysteine 536/cysteine 581, and cysteine 580/cysteine 589. The N-linked (GlcNAc...) asparagine glycan is linked to asparagine 109. The binding pocket for hydrophobic ligands stretch occupies residues 215-319 (ALSSYQKNAC…RGECIIYSNK (105 aa)). An N-linked (GlcNAc...) asparagine glycan is attached at asparagine 434.

Belongs to the ALB/AFP/VDB family. In terms of assembly, forms a 1:1 complex with Wnt family members; interacts with WNT3A and WNT5A. Interacts with WNT1, WNT2B, WNT3, WNT7A, WNT7B, WNT8, WNT9A, WNT9B, WNT10A and WNT10B. In terms of processing, N-glycosylated; more than 90% of the glycans are sialylated.

The protein localises to the secreted. Functionally, functions as a carrier for hydrophobic molecules in body fluids. Essential for the solubility and activity of lipidated Wnt family members, including WNT1, WNT2B, WNT3, WNT3A, WNT5A, WNT7A, WNT7B, WNT8, WNT9A, WNT9B, WNT10A and WNT10B. Binds vitamin E. May transport vitamin E in body fluids under conditions where the lipoprotein system is not sufficient. May be involved in the transport of vitamin E across the blood-brain barrier. This chain is Afamin (AFM), found in Bos taurus (Bovine).